We begin with the raw amino-acid sequence, 140 residues long: Putative transcription elongation factor S-II-like protein 349L (140 aa).

The segment at 100–139 (GAIKCKCGSERVFSFSKQTRSGDESTSVFALCSSCKSKWV) adopts a TFIIS-type zinc-finger fold. Residues C104, C106, C131, and C134 each coordinate Zn(2+).

Belongs to the IIV-6 349L family.

The chain is Putative transcription elongation factor S-II-like protein 349L from Acheta domesticus (House cricket).